The sequence spans 415 residues: Probable beta-1,4-xylosyltransferase IRX10L (415 aa).

M1 is a topological domain (cytoplasmic). Residues 2–22 (KLSSCVLIFLLCNTFSSISAF) traverse the membrane as a helical; Signal-anchor for type II membrane protein segment. Topologically, residues 23–415 (RLSRSQPTER…AGPVADLKPW (393 aa)) are lumenal. N-linked (GlcNAc...) asparagine glycosylation is found at N142 and N403.

It belongs to the glycosyltransferase 47 family. As to expression, present in the xylem and phloem, and, to a lower extent, in interfascicular cells. Expressed in the root tip, shoot apical meristem (SAM), xylem cells of roots and stems, and in the vasculature of roots, cotyledons and leaves.

The protein localises to the golgi apparatus membrane. Involved in the synthesis of the hemicellulose glucuronoxylan, a major component of secondary cell walls. Probably involved in the elongation of glucuronoxylan xylosyl backbone. The chain is Probable beta-1,4-xylosyltransferase IRX10L (IRX10L) from Arabidopsis thaliana (Mouse-ear cress).